The sequence spans 175 residues: Gamma-crystallin B (175 aa).

Beta/gamma crystallin 'Greek key' domains are found at residues 2–40 and 41–83; these read GKIT…RVDS and GCWM…RLIP. A glycan (N-linked (Glc) (glycation) lysine; in vitro) is linked at Lys3. A disulfide bridge links Cys19 with Cys23. Positions 84–88 are connecting peptide; that stretch reads QHTGT. 2 consecutive Beta/gamma crystallin 'Greek key' domains span residues 89–129 and 130–172; these read FRMR…NVLE and GSWV…RRVM.

The protein belongs to the beta/gamma-crystallin family.

Functionally, crystallins are the dominant structural components of the vertebrate eye lens. The sequence is that of Gamma-crystallin B (CRYGB) from Bos taurus (Bovine).